The chain runs to 188 residues: dCTP deaminase (188 aa).

Lys-109–Arg-114 is a binding site for dCTP. Glu-135 serves as the catalytic Proton donor/acceptor. Residues Gln-154, Tyr-168, and Gln-178 each contribute to the dCTP site.

The protein belongs to the dCTP deaminase family. In terms of assembly, homotrimer.

The catalysed reaction is dCTP + H2O + H(+) = dUTP + NH4(+). The protein operates within pyrimidine metabolism; dUMP biosynthesis; dUMP from dCTP (dUTP route): step 1/2. Catalyzes the deamination of dCTP to dUTP. This is dCTP deaminase from Helicobacter pylori (strain J99 / ATCC 700824) (Campylobacter pylori J99).